Consider the following 62-residue polypeptide: ATP synthase subunit J, mitochondrial (62 aa).

The chain crosses the membrane as a helical span at residues 13 to 32 (IVKPLWPYAVGGVITFFLFA).

As to quaternary structure, F-type ATP synthases have 2 components, the catalytic core F(1) and the membrane-embedded component F(0), linked together by a central stalk and a peripheral stalk. The central stalk, also called rotor shaft, is often seen as part of F(1). The peripheral stalk is seen as part of F(0). F(0) contains the membrane channel next to the rotor. F-type ATP synthases form dimers but each monomer functions independently in ATP generation. The dimer consists of 17 different polypeptides: ATP1 (subunit alpha, 3 molecules per monomer, part of F(1)), ATP2 (subunit beta, 3 copies per monomer, part of F(1)), ATP3 (subunit gamma, part of the central stalk), ATP4 (subunit b, part of the peripheral stalk), ATP5/OSCP (subunit 5/OSCP, part of the peripheral stalk), ATP6 (subunit a, part of the peripheral stalk), ATP7 (subunit d, part of the peripheral stalk), ATP8 (subunit 8, part of the peripheral stalk), OLI1 (subunit c, part of the rotor, 10 molecules per monomer), ATP14 (subunit h, part of the peripheral stalk), ATP15 (subunit epsilon, part of the central stalk), ATP16 (subunit delta, part of the central stalk), ATP17 (subunit f, part of the peripheral stalk), ATP18 (subunit i/j, part of the peripheral stalk), ATP19 (subunit k, dimer-specific, at interface between monomers), ATP20 (subunit g, at interface between monomers), TIM11 (subunit e, at interface between monomers).

It localises to the mitochondrion inner membrane. Functionally, mitochondrial membrane ATP synthase (F(1)F(0) ATP synthase or Complex V) produces ATP from ADP in the presence of a proton gradient across the membrane which is generated by electron transport complexes of the respiratory chain. F-type ATP synthases consist of two structural domains, F(1) - containing the extramembraneous catalytic core, and F(0) - containing the membrane proton channel, linked together by a central stalk and a peripheral stalk. During catalysis, ATP synthesis in the catalytic domain of F(1) is coupled via a rotary mechanism of the central stalk subunits to proton translocation. Part of the complex F(0) domain. Minor subunit located with subunit a/ATP6 in the membrane. This chain is ATP synthase subunit J, mitochondrial, found in Yarrowia lipolytica (strain CLIB 122 / E 150) (Yeast).